The chain runs to 430 residues: Maintenance of mitochondrial morphology protein 1 (430 aa).

Over M1–G82 the chain is Lumenal. Residues L83 to F103 traverse the membrane as a helical segment. Topologically, residues A104 to L430 are cytoplasmic. Composition is skewed to basic and acidic residues over residues R126 to N138 and E335 to K346. Disordered stretches follow at residues R126–E154 and Q315–K346. The region spanning A178–P408 is the SMP-LTD domain.

It belongs to the MMM1 family. As to quaternary structure, homodimer. Component of the ER-mitochondria encounter structure (ERMES) or MDM complex, composed of MMM1, MDM10, MDM12 and MDM34. An MMM1 homodimer associates with one molecule of MDM12 on each side in a pairwise head-to-tail manner, and the SMP-LTD domains of MMM1 and MDM12 generate a continuous hydrophobic tunnel for phospholipid trafficking.

Its subcellular location is the endoplasmic reticulum membrane. Functionally, component of the ERMES/MDM complex, which serves as a molecular tether to connect the endoplasmic reticulum (ER) and mitochondria. Components of this complex are involved in the control of mitochondrial shape and protein biogenesis, and function in nonvesicular lipid trafficking between the ER and mitochondria. The MDM12-MMM1 subcomplex functions in the major beta-barrel assembly pathway that is responsible for biogenesis of all outer membrane beta-barrel proteins, and acts in a late step after the SAM complex. The MDM10-MDM12-MMM1 subcomplex further acts in the TOM40-specific pathway after the action of the MDM12-MMM1 complex. Essential for establishing and maintaining the structure of mitochondria and maintenance of mtDNA nucleoids. The sequence is that of Maintenance of mitochondrial morphology protein 1 from Lodderomyces elongisporus (strain ATCC 11503 / CBS 2605 / JCM 1781 / NBRC 1676 / NRRL YB-4239) (Yeast).